Here is a 266-residue protein sequence, read N- to C-terminus: Probable matrix protein (266 aa).

The interval 158 to 177 is disordered; that stretch reads ACSAGTGGTEEGDSDTEEEP. A compositionally biased stretch (acidic residues) spans 167 to 177; it reads EEGDSDTEEEP.

The protein localises to the virion. May play a role in virion budding and release by binding the ribonucleocapsid and the host membrane. This chain is Probable matrix protein, found in Ixodidae (hardbacked ticks).